Reading from the N-terminus, the 605-residue chain is DNA primase (605 aa).

The segment at 39–63 (CPFHHERTPSFHVVPDKKMYYCFGC) adopts a CHC2-type zinc-finger fold. Residues 257-338 (RAAIICEGYM…EVRIVELNGG (82 aa)) form the Toprim domain. Mg(2+)-binding residues include Glu-263, Asp-307, and Asp-309.

The protein belongs to the DnaG primase family. Monomer. Interacts with DnaB. It depends on Zn(2+) as a cofactor. Mg(2+) is required as a cofactor.

It catalyses the reaction ssDNA + n NTP = ssDNA/pppN(pN)n-1 hybrid + (n-1) diphosphate.. In terms of biological role, RNA polymerase that catalyzes the synthesis of short RNA molecules used as primers for DNA polymerase during DNA replication. The sequence is that of DNA primase from Treponema pallidum (strain Nichols).